The primary structure comprises 303 residues: Protoheme IX farnesyltransferase (303 aa).

Helical transmembrane passes span 25-45, 54-74, 118-138, 166-186, 230-250, and 280-300; these read MGLV…AIVM, IPQI…ACAL, CLFL…VGYV, IGWV…FLVV, LVLL…FVVI, and FVYS…VSLI.

The protein belongs to the UbiA prenyltransferase family. Protoheme IX farnesyltransferase subfamily. In terms of assembly, interacts with CtaA.

It localises to the cell membrane. The catalysed reaction is heme b + (2E,6E)-farnesyl diphosphate + H2O = Fe(II)-heme o + diphosphate. It functions in the pathway porphyrin-containing compound metabolism; heme O biosynthesis; heme O from protoheme: step 1/1. Functionally, converts heme B (protoheme IX) to heme O by substitution of the vinyl group on carbon 2 of heme B porphyrin ring with a hydroxyethyl farnesyl side group. The chain is Protoheme IX farnesyltransferase from Staphylococcus epidermidis (strain ATCC 12228 / FDA PCI 1200).